A 162-amino-acid chain; its full sequence is Large ribosomal subunit protein bL17 (162 aa).

A disordered region spans residues 118 to 162 (RAPAAAPEAEEKGEKKAAGKAEKAPKAAKAPKAEKKPAKKAAKAE). Basic and acidic residues predominate over residues 126 to 162 (AEEKGEKKAAGKAEKAPKAAKAPKAEKKPAKKAAKAE).

Belongs to the bacterial ribosomal protein bL17 family. Part of the 50S ribosomal subunit. Contacts protein L32.

This Anaeromyxobacter dehalogenans (strain 2CP-C) protein is Large ribosomal subunit protein bL17.